The following is an 862-amino-acid chain: Protein translocase subunit SecA (862 aa).

Residues Gln-88, 106-110 (GEGKT), and Asp-506 contribute to the ATP site. Residues Cys-839, Cys-841, Cys-850, and His-851 each coordinate Zn(2+).

Belongs to the SecA family. Monomer and homodimer. Part of the essential Sec protein translocation apparatus which comprises SecA, SecYEG and auxiliary proteins SecDF-YajC and YidC. Requires Zn(2+) as cofactor.

The protein localises to the cell inner membrane. The protein resides in the cytoplasm. The catalysed reaction is ATP + H2O + cellular proteinSide 1 = ADP + phosphate + cellular proteinSide 2.. Part of the Sec protein translocase complex. Interacts with the SecYEG preprotein conducting channel. Has a central role in coupling the hydrolysis of ATP to the transfer of proteins into and across the cell membrane, serving as an ATP-driven molecular motor driving the stepwise translocation of polypeptide chains across the membrane. This Campylobacter jejuni subsp. jejuni serotype O:2 (strain ATCC 700819 / NCTC 11168) protein is Protein translocase subunit SecA.